The sequence spans 790 residues: Ribosome biogenesis protein ERB1 (790 aa).

The disordered stretch occupies residues 1–93 (MAKKNTVTGS…SDELQDDSNS (93 aa)). Residues 20–89 (SPEVSESEEI…SEDFSDELQD (70 aa)) show a composition bias toward acidic residues. Residues 255 to 371 (RFVPSKHEAK…LRKVPAYQEN (117 aa)) form a required for interaction with NOP7 region. The interval 371-407 (NLRERFERSLDLYLAPRVRHNKLNIDPDSLIPDLPSP) is required for interaction with YTM1. 7 WD repeats span residues 423-462 (GHIG…QVYH), 470-510 (KDDD…YEIE), 574-616 (QCRK…SQSP), 619-657 (KSKG…LTKK), 660-699 (PGAR…TPYK), 703-743 (YHEK…DLMT), and 759-790 (VHSL…LWTT).

This sequence belongs to the WD repeat BOP1/ERB1 family. Component of the NOP7 complex, composed of ERB1, NOP7 and YTM1. The complex is held together by ERB1, which interacts with NOP7 via its N-terminal domain and with YTM1 via a high-affinity interaction between the seven-bladed beta-propeller domains of the 2 proteins. The NOP7 complex associates with the 66S pre-ribosome.

The protein resides in the nucleus. Its subcellular location is the nucleolus. It is found in the nucleoplasm. In terms of biological role, component of the NOP7 complex, which is required for maturation of the 25S and 5.8S ribosomal RNAs and formation of the 60S ribosome. This Meyerozyma guilliermondii (strain ATCC 6260 / CBS 566 / DSM 6381 / JCM 1539 / NBRC 10279 / NRRL Y-324) (Yeast) protein is Ribosome biogenesis protein ERB1.